The chain runs to 81 residues: Photosystem I iron-sulfur center (81 aa).

2 consecutive 4Fe-4S ferredoxin-type domains span residues 2 to 31 and 39 to 68; these read SHSV…MVPW and IASA…VRVY. Cys-11, Cys-14, Cys-17, Cys-21, Cys-48, Cys-51, Cys-54, and Cys-58 together coordinate [4Fe-4S] cluster.

As to quaternary structure, the eukaryotic PSI reaction center is composed of at least 11 subunits. [4Fe-4S] cluster serves as cofactor.

The protein resides in the plastid. It is found in the chloroplast thylakoid membrane. It carries out the reaction reduced [plastocyanin] + hnu + oxidized [2Fe-2S]-[ferredoxin] = oxidized [plastocyanin] + reduced [2Fe-2S]-[ferredoxin]. Apoprotein for the two 4Fe-4S centers FA and FB of photosystem I (PSI); essential for photochemical activity. FB is the terminal electron acceptor of PSI, donating electrons to ferredoxin. The C-terminus interacts with PsaA/B/D and helps assemble the protein into the PSI complex. Required for binding of PsaD and PsaE to PSI. PSI is a plastocyanin/cytochrome c6-ferredoxin oxidoreductase, converting photonic excitation into a charge separation, which transfers an electron from the donor P700 chlorophyll pair to the spectroscopically characterized acceptors A0, A1, FX, FA and FB in turn. This chain is Photosystem I iron-sulfur center, found in Nephroselmis olivacea (Green alga).